The chain runs to 274 residues: Nitrogenase iron protein (274 aa).

8-15 (GKGGIGKS) contacts ATP. Position 94 (Cys94) interacts with [4Fe-4S] cluster. At Arg97 the chain carries ADP-ribosylarginine; by dinitrogenase reductase ADP-ribosyltransferase. Cys131 is a binding site for [4Fe-4S] cluster.

This sequence belongs to the NifH/BchL/ChlL family. As to quaternary structure, homodimer. [4Fe-4S] cluster is required as a cofactor. The reversible ADP-ribosylation of Arg-97 inactivates the nitrogenase reductase and regulates nitrogenase activity.

It carries out the reaction N2 + 8 reduced [2Fe-2S]-[ferredoxin] + 16 ATP + 16 H2O = H2 + 8 oxidized [2Fe-2S]-[ferredoxin] + 2 NH4(+) + 16 ADP + 16 phosphate + 6 H(+). Its function is as follows. The key enzymatic reactions in nitrogen fixation are catalyzed by the nitrogenase complex, which has 2 components: the iron protein and the molybdenum-iron protein. This chain is Nitrogenase iron protein, found in Chlorobium luteolum (strain DSM 273 / BCRC 81028 / 2530) (Pelodictyon luteolum).